Reading from the N-terminus, the 364-residue chain is tRNA-specific 2-thiouridylase MnmA 1 (364 aa).

ATP-binding positions include 10–17 and methionine 36; that span reads GMSGGVDS. Catalysis depends on cysteine 106, which acts as the Nucleophile. The cysteines at positions 106 and 204 are disulfide-linked. Glycine 130 lines the ATP pocket. The segment at 154–156 is interaction with tRNA; sequence KDQ. Cysteine 204 serves as the catalytic Cysteine persulfide intermediate. The interaction with tRNA stretch occupies residues 310–311; it reads RY.

It belongs to the MnmA/TRMU family.

It is found in the cytoplasm. It catalyses the reaction S-sulfanyl-L-cysteinyl-[protein] + uridine(34) in tRNA + AH2 + ATP = 2-thiouridine(34) in tRNA + L-cysteinyl-[protein] + A + AMP + diphosphate + H(+). Its function is as follows. Catalyzes the 2-thiolation of uridine at the wobble position (U34) of tRNA, leading to the formation of s(2)U34. The sequence is that of tRNA-specific 2-thiouridylase MnmA 1 from Thermoanaerobacter pseudethanolicus (strain ATCC 33223 / 39E) (Clostridium thermohydrosulfuricum).